The primary structure comprises 140 residues: Fluoride-specific ion channel FluC 2 (140 aa).

Transmembrane regions (helical) follow at residues 7–27 (VPPLDPAILLAISLGGGLGAL), 45–65 (WATFVVNVTGCFAIGVLMVLV), 77–97 (PFAGVGLLGGFTTFSTYGLEI), and 106–126 (VLEALGYLAGTVLAALAGVVL). Na(+)-binding residues include glycine 85 and threonine 88.

This sequence belongs to the fluoride channel Fluc/FEX (TC 1.A.43) family.

The protein localises to the cell membrane. It carries out the reaction fluoride(in) = fluoride(out). Its activity is regulated as follows. Na(+) is not transported, but it plays an essential structural role and its presence is essential for fluoride channel function. Functionally, fluoride-specific ion channel. Important for reducing fluoride concentration in the cell, thus reducing its toxicity. This chain is Fluoride-specific ion channel FluC 2, found in Nocardia farcinica (strain IFM 10152).